The chain runs to 161 residues: Cyclic pyranopterin monophosphate synthase (161 aa).

Residues 75 to 77 (MCH) and 115 to 116 (ME) contribute to the substrate site. Asp130 is an active-site residue.

Belongs to the MoaC family. Homohexamer; trimer of dimers.

The enzyme catalyses (8S)-3',8-cyclo-7,8-dihydroguanosine 5'-triphosphate = cyclic pyranopterin phosphate + diphosphate. Its pathway is cofactor biosynthesis; molybdopterin biosynthesis. Its function is as follows. Catalyzes the conversion of (8S)-3',8-cyclo-7,8-dihydroguanosine 5'-triphosphate to cyclic pyranopterin monophosphate (cPMP). The sequence is that of Cyclic pyranopterin monophosphate synthase from Bacillus cereus (strain ATCC 10987 / NRS 248).